The sequence spans 334 residues: MPVSLARNAGMLSVAVLCGGSSPEREVSLAGGKRVADALGRLGYNATVLDLNRESVGQLLAMAPDLVYNALHGVQGEDGCVSGLLDILGLACTHSHVAASSVGMDKVLTKHVLKSLGIDFPKFDVLTKEELLSAKEVLPYPFVIKPVRGGSTIGVHAIFSKSEYLDLSAHADTLEDRMIVEEYVSGQEVQTAVFLGRAIGTMELLFEGRIYSYDAKYVEGLCEHIFPANLPYDIYNLTLEWALKLHQCLGCKTLSRVDFRYDVANKALKLLEINTHPGMTVSSTLPEVLWLRCGLNFDHVVDLIVQDALGIDDSRRAYIDELMGKTVSREPSHV.

The ATP-grasp domain maps to 110–306 (KHVLKSLGID…FDHVVDLIVQ (197 aa)). 138 to 190 (LPYPFVIKPVRGGSTIGVHAIFSKSEYLDLSAHADTLEDRMIVEEYVSGQEVQ) lines the ATP pocket. Mg(2+) is bound by residues Asp-258, Glu-272, and Asn-274.

This sequence belongs to the D-alanine--D-alanine ligase family. Mg(2+) serves as cofactor. Mn(2+) is required as a cofactor.

It localises to the cytoplasm. It catalyses the reaction 2 D-alanine + ATP = D-alanyl-D-alanine + ADP + phosphate + H(+). Its pathway is cell wall biogenesis; peptidoglycan biosynthesis. In terms of biological role, cell wall formation. The protein is D-alanine--D-alanine ligase of Anaplasma marginale (strain Florida).